The chain runs to 256 residues: MAVISMKQLLEAGVHFGHQTRRWNPKMAKYIFTERNGIHVIDLQQTVKLADQAYEFVRDAAANDAVILFVGTKKQAAEAVADEATRAGQYFINHRWLGGTLTNWGTIQKRIARLKEIKRMEEEGTFEVLPKKEVALLNKQRARLEKFLGGIEDMPRIPDVMYVVDPHKEQIAVKEAKKLGIPVVAMVDTNADPDDIDVIIPANDDAIRAVKLITAKLADAVIEGRQGEDAEVAFEADTQAESIEEIVEVVEGSNEA.

Belongs to the universal ribosomal protein uS2 family.

This Streptococcus equi subsp. equi (strain 4047) protein is Small ribosomal subunit protein uS2.